Reading from the N-terminus, the 201-residue chain is ATP-dependent Clp protease proteolytic subunit (201 aa).

Serine 98 serves as the catalytic Nucleophile. Residue histidine 123 is part of the active site.

The protein belongs to the peptidase S14 family. As to quaternary structure, fourteen ClpP subunits assemble into 2 heptameric rings which stack back to back to give a disk-like structure with a central cavity, resembling the structure of eukaryotic proteasomes.

The protein localises to the cytoplasm. It carries out the reaction Hydrolysis of proteins to small peptides in the presence of ATP and magnesium. alpha-casein is the usual test substrate. In the absence of ATP, only oligopeptides shorter than five residues are hydrolyzed (such as succinyl-Leu-Tyr-|-NHMec, and Leu-Tyr-Leu-|-Tyr-Trp, in which cleavage of the -Tyr-|-Leu- and -Tyr-|-Trp bonds also occurs).. Functionally, cleaves peptides in various proteins in a process that requires ATP hydrolysis. Has a chymotrypsin-like activity. Plays a major role in the degradation of misfolded proteins. This is ATP-dependent Clp protease proteolytic subunit from Rickettsia typhi (strain ATCC VR-144 / Wilmington).